The chain runs to 81 residues: Cell division protein ZapB (81 aa).

A coiled-coil region spans residues 5 to 81 (LEVFEKLEAK…QALLGRMEEV (77 aa)). Lysine 10 carries the post-translational modification N6-acetyllysine. Positions 36-67 (NNSLSQEVQNAQHQREELERENNHLKEQQNGW) are disordered. Polar residues predominate over residues 37–47 (NSLSQEVQNAQ). Residues 48-62 (HQREELERENNHLKE) show a composition bias toward basic and acidic residues.

This sequence belongs to the ZapB family. As to quaternary structure, homodimer. The ends of the coiled-coil dimer bind to each other, forming polymers. Interacts with FtsZ.

The protein localises to the cytoplasm. Non-essential, abundant cell division factor that is required for proper Z-ring formation. It is recruited early to the divisome by direct interaction with FtsZ, stimulating Z-ring assembly and thereby promoting cell division earlier in the cell cycle. Its recruitment to the Z-ring requires functional FtsA or ZipA. This Shigella boydii serotype 4 (strain Sb227) protein is Cell division protein ZapB.